The sequence spans 332 residues: Packaging enzyme P4 (332 aa).

The segment at 111–138 (RWPSEGIYSGVTALMGATGSGKSITLNE) is involved in the regulation and mechanisms of transcription, replication and genome packaging. 126–133 (GATGSGKS) is an ATP binding site. A disordered region spans residues 310-332 (LERGSVDTDDRNSAPRRGANFSL). Residues 313 to 322 (GSVDTDDRNS) show a composition bias toward basic and acidic residues.

Homohexamer. Part of the packaging complex composed of RDRP, P4 and P7.

Its subcellular location is the virion. The catalysed reaction is a ribonucleoside 5'-triphosphate + H2O = a ribonucleoside 5'-diphosphate + phosphate + H(+). Its function is as follows. Packaging motor with helicase and translocase activities. Part of the packaging complex that packages the viral RNA segments, replicate them into a double-stranded form and transcribe them. is one of the structural proteins of the polyhedral procapsid, which is responsible for genomic replication and transcription. Displays single-stranded RNA-stimulated NTPase activity. The polypeptide is Packaging enzyme P4 (P4) (Pseudomonas savastanoi pv. phaseolicola (Pseudomonas syringae pv. phaseolicola)).